Here is a 358-residue protein sequence, read N- to C-terminus: Trace amine-associated receptor 7d (358 aa).

Residues 1 to 47 lie on the Extracellular side of the membrane; it reads MRVDDDRFPWDQDSILSRDLLSASSLQLCYENLNRSCVRSPYSPGPR. N-linked (GlcNAc...) asparagine glycosylation occurs at N34. Disulfide bonds link C37-C201 and C120-C205. Residues 48–68 form a helical membrane-spanning segment; sequence LILYAVFGFGAVLAVCGNLMV. Topologically, residues 69 to 83 are cytoplasmic; the sequence is MTSILHFRQLHSPAN. Residues 84-104 traverse the membrane as a helical segment; it reads FLVASLACADFLVGLTVMPFS. Residues 105–122 lie on the Extracellular side of the membrane; sequence MVRSVEGCWYFGDTYCKL. A helical membrane pass occupies residues 123 to 143; sequence HTCFDVSFCYCSLFHLCFISV. Topologically, residues 144-166 are cytoplasmic; that stretch reads DRYIAVSDPLIYPTRFTASVSGK. Residues 167–187 form a helical membrane-spanning segment; that stretch reads CITFSWLLSIIYGFPLIYTGA. The Extracellular segment spans residues 188–212; the sequence is SEAGLEDLVSALTCVGGCQIPMNQK. Residues 213-233 form a helical membrane-spanning segment; the sequence is FVLINFLLFLVPTLVMMTVYS. Topologically, residues 234–274 are cytoplasmic; it reads KIFLIARQQAQNIEKMRKQTARASESYKDRVCKRERKAAKT. A helical membrane pass occupies residues 275–295; sequence LGIAVAAFLLSWLPYFIDSII. Residues 296–309 lie on the Extracellular side of the membrane; sequence DAFLGFITPTYVYE. Residues 310 to 333 form a helical membrane-spanning segment; sequence ILIWIVYYNSSMNPLIYAFFYPWF. Residues 334–358 lie on the Cytoplasmic side of the membrane; the sequence is RKATKLIVTGKILRENSSTINLFPE.

The protein belongs to the G-protein coupled receptor 1 family.

The protein resides in the cell membrane. Its function is as follows. Olfactory receptor specific for N,N-dimethylalkylamines trace amines, such as N,N-dimethylcyclohexylamine. Trace amine compounds are enriched in animal body fluids and act on trace amine-associated receptors (TAARs) to elicit both intraspecific and interspecific innate behaviors. Ligand-binding causes a conformation change that triggers signaling via G(s)-class of G alpha proteins (GNAL or GNAS). In Rattus norvegicus (Rat), this protein is Trace amine-associated receptor 7d.